A 153-amino-acid polypeptide reads, in one-letter code: Type II secretion system core protein G (153 aa).

The propeptide at 1–7 is leader sequence; that stretch reads MERRQRG. F8 is modified (N-methylphenylalanine). Residues 8–28 form a helical membrane-spanning segment; that stretch reads FTLLEIMVVIVILGVLASLVV. Disordered regions lie at residues 68 to 91 and 126 to 153; these read EQGL…PQDG and MPDT…NGNP. The segment covering 134–143 has biased composition (low complexity); sequence GNWNVGNGAH. Residues 144-153 are compositionally biased toward gly residues; the sequence is NNGGNGNGNP.

The protein belongs to the GSP G family. In terms of assembly, type II secretion system is composed of four main components: the outer membrane complex, the inner membrane complex, the cytoplasmic secretion ATPase and the periplasm-spanning pseudopilus. Forms homomultimers. Cleaved by the prepilin peptidase. In terms of processing, methylated by prepilin peptidase at the amino group of the N-terminal phenylalanine once the leader sequence is cleaved.

It is found in the cell inner membrane. Its function is as follows. Core component of the type II secretion system required for the energy-dependent secretion of extracellular factors such as proteases and toxins from the periplasm. Pseudopilin (pilin-like) protein that polymerizes to form the pseudopilus. Further polymerization triggers pseudopilus growth. The sequence is that of Type II secretion system core protein G (outG) from Dickeya chrysanthemi (Pectobacterium chrysanthemi).